The primary structure comprises 126 residues: Large ribosomal subunit protein bL19 (126 aa).

This sequence belongs to the bacterial ribosomal protein bL19 family.

Functionally, this protein is located at the 30S-50S ribosomal subunit interface and may play a role in the structure and function of the aminoacyl-tRNA binding site. This Thiobacillus denitrificans (strain ATCC 25259 / T1) protein is Large ribosomal subunit protein bL19.